A 181-amino-acid polypeptide reads, in one-letter code: uncharacterized protein (181 aa).

This is an uncharacterized protein from Ictalurid herpesvirus 1 (strain Auburn) (IcHV-1).